The following is a 277-amino-acid chain: 2-dehydro-3-deoxyphosphooctonate aldolase (277 aa).

The protein belongs to the KdsA family.

Its subcellular location is the cytoplasm. It carries out the reaction D-arabinose 5-phosphate + phosphoenolpyruvate + H2O = 3-deoxy-alpha-D-manno-2-octulosonate-8-phosphate + phosphate. It participates in carbohydrate biosynthesis; 3-deoxy-D-manno-octulosonate biosynthesis; 3-deoxy-D-manno-octulosonate from D-ribulose 5-phosphate: step 2/3. The protein operates within bacterial outer membrane biogenesis; lipopolysaccharide biosynthesis. This is 2-dehydro-3-deoxyphosphooctonate aldolase from Hydrogenovibrio crunogenus (strain DSM 25203 / XCL-2) (Thiomicrospira crunogena).